The primary structure comprises 743 residues: NAD(P)H-quinone oxidoreductase subunit 5, chloroplastic (743 aa).

Transmembrane regions (helical) follow at residues 9–29, 40–60, 89–109, 125–145, 147–167, 185–205, 219–239, 258–278, 283–303, 327–347, 354–374, 396–416, 425–445, 548–568, 607–627, and 723–743; these read WIIP…LLLF, WAFQ…NLSI, IDPL…LVLI, FAYM…SNLI, IYIF…FWFT, GDFG…SFEF, NEVN…GAIA, TPIS…FLVA, LFIV…ITVF, LGYM…FHLI, ALLF…VGYC, ISFL…CFWS, WLYS…TAFY, LFPI…GIPF, VFSV…YKPV, and YLFF…FFNL.

This sequence belongs to the complex I subunit 5 family. NDH is composed of at least 16 different subunits, 5 of which are encoded in the nucleus.

The protein resides in the plastid. Its subcellular location is the chloroplast thylakoid membrane. It catalyses the reaction a plastoquinone + NADH + (n+1) H(+)(in) = a plastoquinol + NAD(+) + n H(+)(out). The enzyme catalyses a plastoquinone + NADPH + (n+1) H(+)(in) = a plastoquinol + NADP(+) + n H(+)(out). In terms of biological role, NDH shuttles electrons from NAD(P)H:plastoquinone, via FMN and iron-sulfur (Fe-S) centers, to quinones in the photosynthetic chain and possibly in a chloroplast respiratory chain. The immediate electron acceptor for the enzyme in this species is believed to be plastoquinone. Couples the redox reaction to proton translocation, and thus conserves the redox energy in a proton gradient. The protein is NAD(P)H-quinone oxidoreductase subunit 5, chloroplastic (ndhF) of Carthamus tinctorius (Safflower).